Here is a 172-residue protein sequence, read N- to C-terminus: Methylated-DNA--protein-cysteine methyltransferase (172 aa).

Cys-142 serves as the catalytic Nucleophile; methyl group acceptor.

This sequence belongs to the MGMT family.

It localises to the cytoplasm. The enzyme catalyses a 6-O-methyl-2'-deoxyguanosine in DNA + L-cysteinyl-[protein] = S-methyl-L-cysteinyl-[protein] + a 2'-deoxyguanosine in DNA. It catalyses the reaction a 4-O-methyl-thymidine in DNA + L-cysteinyl-[protein] = a thymidine in DNA + S-methyl-L-cysteinyl-[protein]. Involved in the cellular defense against the biological effects of O6-methylguanine (O6-MeG) and O4-methylthymine (O4-MeT) in DNA. Repairs the methylated nucleobase in DNA by stoichiometrically transferring the methyl group to a cysteine residue in the enzyme. This is a suicide reaction: the enzyme is irreversibly inactivated. The chain is Methylated-DNA--protein-cysteine methyltransferase from Pyrococcus horikoshii (strain ATCC 700860 / DSM 12428 / JCM 9974 / NBRC 100139 / OT-3).